The following is a 203-amino-acid chain: Small ribosomal subunit protein uS2 (203 aa).

This sequence belongs to the universal ribosomal protein uS2 family.

This is Small ribosomal subunit protein uS2 from Methanopyrus kandleri (strain AV19 / DSM 6324 / JCM 9639 / NBRC 100938).